The sequence spans 200 residues: 2,3-bisphosphoglycerate-dependent phosphoglycerate mutase (200 aa).

H9 acts as the Tele-phosphohistidine intermediate in catalysis. H142 is an active-site residue.

The protein belongs to the phosphoglycerate mutase family. As to quaternary structure, homodimer.

It catalyses the reaction (2R)-2-phosphoglycerate = (2R)-3-phosphoglycerate. Its pathway is carbohydrate degradation; glycolysis; pyruvate from D-glyceraldehyde 3-phosphate: step 3/5. In terms of biological role, catalyzes the interconversion of 2-phosphoglycerate and 3-phosphoglycerate. The polypeptide is 2,3-bisphosphoglycerate-dependent phosphoglycerate mutase (Thermoplasma acidophilum (strain ATCC 25905 / DSM 1728 / JCM 9062 / NBRC 15155 / AMRC-C165)).